Consider the following 550-residue polypeptide: 65-kDa microtubule-associated protein 5 (550 aa).

2 coiled-coil regions span residues 46 to 174 (NKKV…QKVN) and 288 to 310 (IREAEDEVRRLNSLKSSKMKELV). The interval 471–531 (QFREQKRLQG…PGRSVTSGGK (61 aa)) is disordered. Positions 502-511 (QSLNTDNVTK) are enriched in polar residues.

This sequence belongs to the MAP65/ASE1 family. In terms of assembly, forms a dimer. Binds to MT, mostly with coaligned MT, both between parallel or antiparallel, forming thick bundles. Bundles polymerized MT via the formation of 25-nm crossbridges with cortical MT.

Its subcellular location is the nucleus. It localises to the cytoplasm. The protein resides in the cytoskeleton. It is found in the spindle. The protein localises to the phragmoplast. Its subcellular location is the cell cortex. It localises to the cell junction. The protein resides in the plasmodesma. Microtubule-associated protein that bundle and stabilize adjacent microtubules (MT) of the cell cortex. Confers MT resistance to the drug oryzalin. Promotes the formation of a planar network of antiparallel microtubules. This chain is 65-kDa microtubule-associated protein 5 (MAP65-5), found in Arabidopsis thaliana (Mouse-ear cress).